The chain runs to 120 residues: uncharacterized protein (120 aa).

The chain crosses the membrane as a helical span at residues 22 to 44; sequence ITVASCIGAAQGALFSIASALLL. N-linked (GlcNAc...) asparagine glycosylation occurs at asparagine 114.

It localises to the membrane. This is an uncharacterized protein from Saccharomyces cerevisiae (strain ATCC 204508 / S288c) (Baker's yeast).